Consider the following 383-residue polypeptide: Gap junction alpha-1 protein (383 aa).

Topologically, residues 2-23 (GDWSALGKLLDKVQAYSTAGGK) are cytoplasmic. A Phosphoserine modification is found at Ser5. A helical membrane pass occupies residues 24-44 (VWLSVLFIFRILLLGTAVESA). Residues 45–76 (WGDEQSAFRCNTQQPGCENVCYDKSFPISHVR) lie on the Extracellular side of the membrane. Intrachain disulfides connect Cys54–Cys193 and Cys188–Cys199. The chain crosses the membrane as a helical span at residues 77 to 97 (FWVLQIIFVSVPTLLYLAHVF). The Cytoplasmic portion of the chain corresponds to 98 to 156 (YVMRKEEKLNKKEEELKVVAQTDGANVDMHLKQIEIKKFKYGIEEHGKVKMRGGLLRTY). Lys145 is covalently cross-linked (Glycyl lysine isopeptide (Lys-Gly) (interchain with G-Cter in SUMO)). Residues 157-177 (IISILFKSVFEVAFLLIQWYI) form a helical membrane-spanning segment. Topologically, residues 178-208 (YGFSLSAVYTCKRDPCPHQVDCFLSRPTEKT) are extracellular. A helical membrane pass occupies residues 209–229 (IFIIFMLVVSLVSLALNIIEL). Residues 230–383 (FYVFFKGVKD…SRPRPDDLEI (154 aa)) lie on the Cytoplasmic side of the membrane. Residue Lys238 forms a Glycyl lysine isopeptide (Lys-Gly) (interchain with G-Cter in SUMO) linkage. The interval 245–383 (SDPYHTTTGP…SRPRPDDLEI (139 aa)) is interaction with NOV. Position 248 is a phosphotyrosine (Tyr248). A phosphoserine mark is found at Ser256, Ser258, and Ser263. Residues 265–383 (KYAYFNGCSS…SRPRPDDLEI (119 aa)) are interaction with UBQLN4. Cys272 is subject to S-nitrosocysteine. Thr276 is modified (phosphothreonine). Residues Ser307 and Ser315 each carry the phosphoserine modification. Positions 318–333 (QNRMGQAGSTISNSHA) are enriched in polar residues. The tract at residues 318 to 383 (QNRMGQAGST…SRPRPDDLEI (66 aa)) is disordered. Phosphoserine; by CK1 is present on Ser326. Residue Thr327 is modified to Phosphothreonine. A phosphoserine; by CK1 mark is found at Ser329 and Ser331. The segment covering 339-352 (PDDHQNSKKLDAGH) has biased composition (basic and acidic residues). A phosphoserine mark is found at Ser345 and Ser366. Residues 363-375 (RPSSRASSRASSR) are compositionally biased toward low complexity. At Ser369 the chain carries Phosphoserine; by PKC/PRKCG and PKC/PRKCD. Phosphoserine occurs at positions 370 and 374.

Belongs to the connexin family. Alpha-type (group II) subfamily. As to quaternary structure, a connexon is composed of a hexamer of connexins. Interacts with SGSM3. Interacts with RIC1/CIP150. Interacts with CNST and CSNK1D. Interacts (via C-terminus) with TJP1. Interacts (via C-terminus) with SRC (via SH3 domain). Interacts (not ubiquitinated) with UBQLN4 (via UBA domain). Interacts with NOV. Interacts with TMEM65. Interacts with ANK3/ANKG and PKP2. Post-translationally, phosphorylation at Ser-326, Ser-329 and Ser-331 by CK1 modulates gap junction assembly. Phosphorylated at Ser-369 by PRKCG; phosphorylation induces disassembly of gap junction plaques and inhibition of gap junction activity. Phosphorylation at Ser-369 by PRKCD triggers its internalization into small vesicles leading to proteasome-mediated degradation. Sumoylated with SUMO1, SUMO2 and SUMO3, which may regulate the level of functional Cx43 gap junctions at the plasma membrane. May be desumoylated by SENP1 or SENP2. In terms of processing, acetylated in the developing cortex; leading to delocalization from the cell membrane.

It is found in the cell membrane. It localises to the cell junction. The protein localises to the gap junction. The protein resides in the endoplasmic reticulum. Functionally, gap junction protein that acts as a regulator of bladder capacity. A gap junction consists of a cluster of closely packed pairs of transmembrane channels, the connexons, through which materials of low MW diffuse from one cell to a neighboring cell. May play a critical role in the physiology of hearing by participating in the recycling of potassium to the cochlear endolymph. Negative regulator of bladder functional capacity: acts by enhancing intercellular electrical and chemical transmission, thus sensitizing bladder muscles to cholinergic neural stimuli and causing them to contract. May play a role in cell growth inhibition through the regulation of NOV expression and localization. Plays an essential role in gap junction communication in the ventricles. In Bos taurus (Bovine), this protein is Gap junction alpha-1 protein (GJA1).